The following is a 111-amino-acid chain: Denmotoxin (111 aa).

The first 19 residues, 1 to 19 (MKTLLLAVAVVAFVCLGSA), serve as a signal peptide directing secretion. Residues 20–34 (DQLGLGRQQIDWGQG) constitute a propeptide that is removed on maturation. The residue at position 35 (Gln35) is a Pyrrolidone carboxylic acid. 5 cysteine pairs are disulfide-bonded: Cys44/Cys68, Cys47/Cys55, Cys61/Cys87, Cys91/Cys102, and Cys103/Cys108.

As to quaternary structure, monomer. Expressed by the venom gland.

It localises to the secreted. Functionally, this bird-specific postsynaptic neurotoxin irreversibly binds and inhibits the chick muscle alpha-1-beta-1-gamma-delta (CHRNA1-CHRNB1-CHRNG-CHNRD) nicotinic acetylcholine receptor (nAChR) 100-fold more compared with the mouse receptor. The weak binding to mouse receptor is reversible. This Boiga dendrophila (Mangrove snake) protein is Denmotoxin.